The chain runs to 397 residues: Ribosomal RNA large subunit methyltransferase I (397 aa).

In terms of domain architecture, PUA spans 2–82 (TTSIYLVKGR…EVINVDFFVK (81 aa)).

This sequence belongs to the methyltransferase superfamily. RlmI family.

It localises to the cytoplasm. It catalyses the reaction cytidine(1962) in 23S rRNA + S-adenosyl-L-methionine = 5-methylcytidine(1962) in 23S rRNA + S-adenosyl-L-homocysteine + H(+). Its function is as follows. Specifically methylates the cytosine at position 1962 (m5C1962) of 23S rRNA. The polypeptide is Ribosomal RNA large subunit methyltransferase I (Photobacterium profundum (strain SS9)).